A 594-amino-acid polypeptide reads, in one-letter code: Aspartate--tRNA(Asp/Asn) ligase (594 aa).

L-aspartate is bound at residue Glu-175. The aspartate stretch occupies residues 199 to 202 (QLFK). Arg-221 is an L-aspartate binding site. Residues 221–223 (RDE) and Gln-230 contribute to the ATP site. His-446 provides a ligand contact to L-aspartate. Glu-492 contributes to the ATP binding site. Arg-499 provides a ligand contact to L-aspartate. 544-547 (GFDR) serves as a coordination point for ATP.

The protein belongs to the class-II aminoacyl-tRNA synthetase family. Type 1 subfamily. Homodimer.

It is found in the cytoplasm. It carries out the reaction tRNA(Asx) + L-aspartate + ATP = L-aspartyl-tRNA(Asx) + AMP + diphosphate. In terms of biological role, aspartyl-tRNA synthetase with relaxed tRNA specificity since it is able to aspartylate not only its cognate tRNA(Asp) but also tRNA(Asn). Reaction proceeds in two steps: L-aspartate is first activated by ATP to form Asp-AMP and then transferred to the acceptor end of tRNA(Asp/Asn). This Hydrogenobaculum sp. (strain Y04AAS1) protein is Aspartate--tRNA(Asp/Asn) ligase.